The following is an 81-amino-acid chain: Cortexin-2 (81 aa).

The chain crosses the membrane as a helical span at residues 29–49 (TGFAFVGILCIFLGLLIIRCF).

Belongs to the cortexin family.

It localises to the membrane. The sequence is that of Cortexin-2 (CTXN2) from Homo sapiens (Human).